Here is a 336-residue protein sequence, read N- to C-terminus: DNA-directed RNA polymerase subunit alpha (336 aa).

An alpha N-terminal domain (alpha-NTD) region spans residues 1–234; the sequence is MIEFVIPKKL…NHFKIVTEGL (234 aa). The segment at 269-336 is alpha C-terminal domain (alpha-CTD); sequence VYNRKIDELE…KFGLELRKGE (68 aa).

Belongs to the RNA polymerase alpha chain family. In terms of assembly, homodimer. The RNAP catalytic core consists of 2 alpha, 1 beta, 1 beta' and 1 omega subunit. When a sigma factor is associated with the core the holoenzyme is formed, which can initiate transcription.

It carries out the reaction RNA(n) + a ribonucleoside 5'-triphosphate = RNA(n+1) + diphosphate. Its function is as follows. DNA-dependent RNA polymerase catalyzes the transcription of DNA into RNA using the four ribonucleoside triphosphates as substrates. The chain is DNA-directed RNA polymerase subunit alpha from Thermotoga petrophila (strain ATCC BAA-488 / DSM 13995 / JCM 10881 / RKU-1).